A 109-amino-acid polypeptide reads, in one-letter code: Heterogeneous nuclear ribonucleoprotein-like protein HD40 (109 aa).

The disordered stretch occupies residues 1 to 36 (EEVSNGQEHTEGMXQGEXNXIXVEEHHEGEKNSHLV). A compositionally biased stretch (basic and acidic residues) spans 23-36 (VEEHHEGEKNSHLV). The RRM domain maps to 40-50 (EEKKLFVGALS). 2 positions are modified to asymmetric dimethylarginine: R102 and R105.

The protein resides in the cytoplasm. It localises to the nucleus. The sequence is that of Heterogeneous nuclear ribonucleoprotein-like protein HD40 from Artemia salina (Brine shrimp).